We begin with the raw amino-acid sequence, 518 residues long: uncharacterized protein (518 aa).

Its subcellular location is the virion. This is an uncharacterized protein from Acanthamoeba polyphaga (Amoeba).